The primary structure comprises 63 residues: Translational regulator CsrA (63 aa).

The protein belongs to the CsrA/RsmA family. Homodimer; the beta-strands of each monomer intercalate to form a hydrophobic core, while the alpha-helices form wings that extend away from the core.

Its subcellular location is the cytoplasm. A key translational regulator that binds mRNA to regulate translation initiation and/or mRNA stability. Mediates global changes in gene expression, shifting from rapid growth to stress survival by linking envelope stress, the stringent response and the catabolite repression systems. Usually binds in the 5'-UTR; binding at or near the Shine-Dalgarno sequence prevents ribosome-binding, repressing translation, binding elsewhere in the 5'-UTR can activate translation and/or stabilize the mRNA. Its function is antagonized by small RNA(s). This chain is Translational regulator CsrA, found in Haemophilus influenzae (strain 86-028NP).